The following is a 1835-amino-acid chain: Urea amidolyase (1835 aa).

ATP-binding positions include Gly122–Thr129 and Lys747. The 444-residue stretch at Leu632–Tyr1075 folds into the Biotin carboxylation domain. One can recognise an ATP-grasp domain in the interval Arg751–Ala948. Ser803 bears the Phosphoserine mark. Residues Glu830 and Asn865 each coordinate ATP. One can recognise a Biotinyl-binding domain in the interval Asp1754–Glu1832. Lys1798 bears the N6-biotinyllysine mark.

As to quaternary structure, monomer. The cofactor is biotin.

It catalyses the reaction urea + hydrogencarbonate + ATP = urea-1-carboxylate + ADP + phosphate + H(+). It carries out the reaction urea-1-carboxylate + H2O + 3 H(+) = 2 NH4(+) + 2 CO2. The protein operates within nitrogen metabolism; urea degradation; CO(2) and NH(3) from urea (allophanate route): step 1/2. It participates in nitrogen metabolism; urea degradation; CO(2) and NH(3) from urea (allophanate route): step 2/2. In terms of biological role, hydrolysis of urea to ammonia and CO(2). The sequence is that of Urea amidolyase (DUR1,2) from Saccharomyces cerevisiae (strain ATCC 204508 / S288c) (Baker's yeast).